The chain runs to 291 residues: Ribose-phosphate pyrophosphokinase (291 aa).

Residues 34-36 (DGE) and 93-94 (RQ) each bind ATP. The Mg(2+) site is built by His127 and Asp165. Residue Lys188 is part of the active site. D-ribose 5-phosphate contacts are provided by residues Arg190, Asp216, and 220 to 224 (STGGT).

This sequence belongs to the ribose-phosphate pyrophosphokinase family. Class III (archaeal) subfamily. As to quaternary structure, homodimer. Requires Mg(2+) as cofactor.

It is found in the cytoplasm. It carries out the reaction D-ribose 5-phosphate + ATP = 5-phospho-alpha-D-ribose 1-diphosphate + AMP + H(+). The protein operates within metabolic intermediate biosynthesis; 5-phospho-alpha-D-ribose 1-diphosphate biosynthesis; 5-phospho-alpha-D-ribose 1-diphosphate from D-ribose 5-phosphate (route I): step 1/1. In terms of biological role, involved in the biosynthesis of the central metabolite phospho-alpha-D-ribosyl-1-pyrophosphate (PRPP) via the transfer of pyrophosphoryl group from ATP to 1-hydroxyl of ribose-5-phosphate (Rib-5-P). The protein is Ribose-phosphate pyrophosphokinase of Saccharolobus solfataricus (strain ATCC 35092 / DSM 1617 / JCM 11322 / P2) (Sulfolobus solfataricus).